The primary structure comprises 400 residues: Acetate kinase (400 aa).

N10 provides a ligand contact to Mg(2+). Residue K17 participates in ATP binding. R91 serves as a coordination point for substrate. The Proton donor/acceptor role is filled by D150. ATP is bound by residues 210 to 214, 285 to 287, and 333 to 337; these read HLGNG, DCR, and GIGEN. A Mg(2+)-binding site is contributed by E387.

It belongs to the acetokinase family. As to quaternary structure, homodimer. Requires Mg(2+) as cofactor. It depends on Mn(2+) as a cofactor.

The protein localises to the cytoplasm. The catalysed reaction is acetate + ATP = acetyl phosphate + ADP. It participates in metabolic intermediate biosynthesis; acetyl-CoA biosynthesis; acetyl-CoA from acetate: step 1/2. Its function is as follows. Catalyzes the formation of acetyl phosphate from acetate and ATP. Can also catalyze the reverse reaction. This Serratia proteamaculans (strain 568) protein is Acetate kinase.